Reading from the N-terminus, the 1463-residue chain is Nucleoporin NUP152 (1463 aa).

3 disordered regions span residues 1–199 (MDPP…GRPG), 339–568 (GIPD…ELPA), and 609–1064 (TTKK…FGNT). 6 stretches are compositionally biased toward polar residues: residues 32–42 (STNSNSVTANA), 81–92 (GPSSKLSQSVSA), 144–155 (TSSKATSFSGAP), 175–191 (TTYT…QSFP), 367–378 (PSSSTFTHTASP), and 416–472 (PAKT…SSNI). Positions 481 to 498 (KDEDNESDTGSEAEAEDE) are enriched in acidic residues. Low complexity-rich tracts occupy residues 511 to 523 (GASS…GGES) and 616 to 630 (AAAP…TPTT). 3 stretches are compositionally biased toward polar residues: residues 651–664 (IFGS…TSIP), 673–689 (PATS…TSAA), and 720–746 (TTES…TQPQ). The stretch at 729–732 (FQFG) is one FXFG 1 repeat. A compositionally biased stretch (low complexity) spans 753-768 (KPPSTETPTEKPATTS). The span at 777 to 789 (PATTSSLFGSATT) shows a compositional bias: polar residues. Residues 803–813 (TTTPADKPTTT) are compositionally biased toward low complexity. Over residues 814–828 (NLFGSTSTQATSGSD) the composition is skewed to polar residues. Residues 835–838 (FAFG) form an FXFG 2 repeat. Residues 840–863 (TTESKPTTSLFGSTTPAPATSTEN) are compositionally biased toward polar residues. A compositionally biased stretch (low complexity) spans 870 to 881 (ATTTSATPATNT). Composition is skewed to polar residues over residues 900-923 (GSST…STEQ), 940-961 (GSTS…TMTE), 968-987 (SIST…STTE), 998-1029 (STEQ…STEQ), and 1037-1055 (PAST…TTEN). An FXFG 3 repeat occupies 910–913 (FQFG). 4 FXFG repeats span residues 1074 to 1077 (FNFG), 1127 to 1130 (FNFG), 1141 to 1144 (FTFG), and 1152 to 1155 (FTFG). Disordered regions lie at residues 1155 to 1174 (GASS…PIFS) and 1179 to 1217 (QPSS…KHVP). The segment covering 1156–1170 (ASSDSSNASNNASSA) has biased composition (low complexity). The FXFG 8 repeat unit spans residues 1173-1176 (FSFG). Positions 1179–1199 (QPSSTPLFGQNNPPAASNIFA) are enriched in polar residues. An FXFG 9 repeat occupies 1236–1239 (FTFG). The span at 1240 to 1271 (GASSLATTPAASTPEPSAANAAAAGEDQGASA) shows a compositional bias: low complexity. Disordered stretches follow at residues 1240 to 1335 (GASS…PWKV) and 1416 to 1463 (AALE…DEKK). The RanBD1 domain occupies 1289-1427 (GEEDESVVHE…LEEHKKANEK (139 aa)). A compositionally biased stretch (basic and acidic residues) spans 1418–1463 (LEEHKKANEKKDGEKNEESEKKDEKQEEKKNEEKKDEKEEKKDEKK).

The nuclear pore complex (NPC) constitutes the exclusive means of nucleocytoplasmic transport. NPCs allow the passive diffusion of ions and small molecules and the active, nuclear transport receptor-mediated bidirectional transport of macromolecules such as proteins, RNAs, ribonucleoparticles (RNPs), and ribosomal subunits across the nuclear envelope. The 55-60 MDa NPC is composed of at least 28 different subunits: AMO1, ELYS, GLE1, GLE2, MLP1, NDC1, NIC96, NSP1, NUP133, NUP145, NUP152, NUP159, NUP170, NUP188, NUP192, NUP37, NUP49, NUP53, NUP56, NUP57, NUP82, NUP84, NUP85, POM152, POM33, POM34, SEC13 and SEH1. Due to its 8-fold rotational symmetry, all subunits are present with 8 copies or multiples thereof.

Its subcellular location is the nucleus. It is found in the nuclear pore complex. The protein resides in the nucleus membrane. Functions as a component of the nuclear pore complex (NPC). NPC components, collectively referred to as nucleoporins (NUPs), can play the role of both NPC structural components and of docking or interaction partners for transiently associated nuclear transport factors. Active directional transport is assured by both, a Phe-Gly (FG) repeat affinity gradient for these transport factors across the NPC and a transport cofactor concentration gradient across the nuclear envelope (GSP1 and GSP2 GTPases associated predominantly with GTP in the nucleus, with GDP in the cytoplasm). This Chaetomium thermophilum (strain DSM 1495 / CBS 144.50 / IMI 039719) (Thermochaetoides thermophila) protein is Nucleoporin NUP152 (NUP152).